Here is a 168-residue protein sequence, read N- to C-terminus: MVKDILAPGLRVVFCGINPGLSSANTGFPFAHPANRFWKVIHLAGFTDRQLKPEEAEKLLDFRCGVTKLVDRPTVQATEVKLHELRSGGRNLIEKIEDYQPAALAVLGKQAFEQGFSQRGIAWGKQKIAIGATMVWVLPNPSGLNRIKTEKLVEAYRELDQALIMRGL.

It belongs to the uracil-DNA glycosylase (UDG) superfamily. TDG/mug family. As to quaternary structure, binds DNA as a monomer.

The protein resides in the cytoplasm. The enzyme catalyses Specifically hydrolyzes mismatched double-stranded DNA and polynucleotides, releasing free uracil.. Functionally, excises ethenocytosine and uracil, which can arise by alkylation or deamination of cytosine, respectively, from the corresponding mispairs with guanine in ds-DNA. It is capable of hydrolyzing the carbon-nitrogen bond between the sugar-phosphate backbone of the DNA and the mispaired base. The complementary strand guanine functions in substrate recognition. Required for DNA damage lesion repair in stationary-phase cells. The sequence is that of G/U mismatch-specific DNA glycosylase from Salmonella agona (strain SL483).